The primary structure comprises 423 residues: Mannose-6-phosphate isomerase (423 aa).

An N-acetylalanine modification is found at alanine 2. Phosphoserine occurs at positions 102 and 108. Zn(2+)-binding residues include glutamine 110, histidine 112, glutamate 137, and histidine 276. Arginine 295 is an active-site residue.

Belongs to the mannose-6-phosphate isomerase type 1 family. Zn(2+) is required as a cofactor.

The protein resides in the cytoplasm. It catalyses the reaction D-mannose 6-phosphate = D-fructose 6-phosphate. Its pathway is nucleotide-sugar biosynthesis; GDP-alpha-D-mannose biosynthesis; alpha-D-mannose 1-phosphate from D-fructose 6-phosphate: step 1/2. Isomerase that catalyzes the interconversion of fructose-6-P and mannose-6-P and has a critical role in the supply of D-mannose derivatives required for many eukaryotic glycosylation reactions. The sequence is that of Mannose-6-phosphate isomerase (MPI) from Pan troglodytes (Chimpanzee).